A 321-amino-acid chain; its full sequence is Annexin B10 (321 aa).

4 Annexin repeats span residues 15-86 (FDAS…GLMM), 87-158 (PPVE…LIVT), 171-243 (GQAK…AIVE), and 247-319 (SPAA…ALLG).

The protein belongs to the annexin family.

The polypeptide is Annexin B10 (AnxB10) (Drosophila melanogaster (Fruit fly)).